The primary structure comprises 154 residues: Fucose mutarotase (154 aa).

H24 acts as the Proton donor in catalysis. D32 provides a ligand contact to substrate. Residue D69 is part of the active site. The substrate site is built by M79, Y120, Y138, and N140. Y120 is an active-site residue.

This sequence belongs to the RbsD / FucU family. In terms of assembly, mainly homodimer, but also exists as homotetramer, homooctamer, and homodecamer. The homodimeric form seems catalytically inactive.

The enzyme catalyses alpha-L-fucose = beta-L-fucose. Its pathway is carbohydrate metabolism; L-fucose metabolism. Functionally, involved in the interconversion between alpha- and beta-L-fucoses. L-Fucose (6-deoxy-L-galactose) exists as alpha-L-fucose (29.5%) and beta-L-fucose (70.5%), the beta-form is metabolized through the salvage pathway. GDP-L-fucose formed either by the de novo or salvage pathways is transported into the endoplasmic reticulum, where it serves as a substrate for N- and O-glycosylations by fucosyltransferases. Fucosylated structures expressed on cell surfaces or secreted in biological fluids are believed to play a critical role in cell-cell adhesion and recognition processes. The protein is Fucose mutarotase (FUOM) of Homo sapiens (Human).